We begin with the raw amino-acid sequence, 247 residues long: tRNA pseudouridine synthase A (247 aa).

Asp-52 (nucleophile) is an active-site residue. A substrate-binding site is contributed by Tyr-113.

This sequence belongs to the tRNA pseudouridine synthase TruA family. Homodimer.

It catalyses the reaction uridine(38/39/40) in tRNA = pseudouridine(38/39/40) in tRNA. Its function is as follows. Formation of pseudouridine at positions 38, 39 and 40 in the anticodon stem and loop of transfer RNAs. In Bartonella bacilliformis (strain ATCC 35685 / KC583 / Herrer 020/F12,63), this protein is tRNA pseudouridine synthase A.